A 92-amino-acid polypeptide reads, in one-letter code: DNA-directed RNA polymerase subunit Rpo5 (92 aa).

This sequence belongs to the archaeal Rpo5/eukaryotic RPB5 RNA polymerase subunit family. In terms of assembly, part of the RNA polymerase complex.

Its subcellular location is the cytoplasm. It catalyses the reaction RNA(n) + a ribonucleoside 5'-triphosphate = RNA(n+1) + diphosphate. Functionally, DNA-dependent RNA polymerase (RNAP) catalyzes the transcription of DNA into RNA using the four ribonucleoside triphosphates as substrates. This is DNA-directed RNA polymerase subunit Rpo5 from Methanopyrus kandleri (strain AV19 / DSM 6324 / JCM 9639 / NBRC 100938).